Reading from the N-terminus, the 145-residue chain is D-aminoacyl-tRNA deacylase (145 aa).

Residues 137–138 carry the Gly-cisPro motif, important for rejection of L-amino acids motif; the sequence is GP.

Belongs to the DTD family. Homodimer.

The protein localises to the cytoplasm. It carries out the reaction glycyl-tRNA(Ala) + H2O = tRNA(Ala) + glycine + H(+). The catalysed reaction is a D-aminoacyl-tRNA + H2O = a tRNA + a D-alpha-amino acid + H(+). Its function is as follows. An aminoacyl-tRNA editing enzyme that deacylates mischarged D-aminoacyl-tRNAs. Also deacylates mischarged glycyl-tRNA(Ala), protecting cells against glycine mischarging by AlaRS. Acts via tRNA-based rather than protein-based catalysis; rejects L-amino acids rather than detecting D-amino acids in the active site. By recycling D-aminoacyl-tRNA to D-amino acids and free tRNA molecules, this enzyme counteracts the toxicity associated with the formation of D-aminoacyl-tRNA entities in vivo and helps enforce protein L-homochirality. This chain is D-aminoacyl-tRNA deacylase, found in Escherichia coli O139:H28 (strain E24377A / ETEC).